Consider the following 300-residue polypeptide: Delta-9 desaturase-like 4 protein (300 aa).

2 helical membrane passes run valine 39–leucine 59 and phenylalanine 61–leucine 81. A Histidine box-1 motif is present at residues histidine 78–histidine 83. A Histidine box-2 motif is present at residues histidine 115 to histidine 119. Transmembrane regions (helical) follow at residues isoleucine 175–leucine 195 and glycine 200–tryptophan 220. The short motif at histidine 247–histidine 251 is the Histidine box-3 element.

It belongs to the fatty acid desaturase type 1 family. It depends on Fe cation as a cofactor.

It localises to the endoplasmic reticulum membrane. It functions in the pathway lipid metabolism; polyunsaturated fatty acid biosynthesis. This chain is Delta-9 desaturase-like 4 protein, found in Arabidopsis thaliana (Mouse-ear cress).